The chain runs to 278 residues: Large ribosomal subunit protein uL2 (278 aa).

2 disordered regions span residues 28–56 (KPVKALTEGKRKSGGRNNQGHATARGIAG) and 221–278 (RGVA…KKKR). Over residues 269–278 (IRSRHAKKKR) the composition is skewed to basic residues.

The protein belongs to the universal ribosomal protein uL2 family. Part of the 50S ribosomal subunit. Forms a bridge to the 30S subunit in the 70S ribosome.

Its function is as follows. One of the primary rRNA binding proteins. Required for association of the 30S and 50S subunits to form the 70S ribosome, for tRNA binding and peptide bond formation. It has been suggested to have peptidyltransferase activity; this is somewhat controversial. Makes several contacts with the 16S rRNA in the 70S ribosome. The sequence is that of Large ribosomal subunit protein uL2 from Rhizorhabdus wittichii (strain DSM 6014 / CCUG 31198 / JCM 15750 / NBRC 105917 / EY 4224 / RW1) (Sphingomonas wittichii).